A 340-amino-acid chain; its full sequence is MGFIDEVKLCLKAGDGGDGCASFRREKFVEFGGPNGGNGGKGGNIVFISDANLNTLLHFRYRRHIKADSGKNGAGRDRSGTAGKDVILKVPVGAQIIDEESEEIIVDLDKPGMEFQVAQGGKGGLGNTNFKSSTNKAPRHFTYGQPGEEKHVLLKLKVLSDVGIIGMPNAGKSKFLTRCSNSDTKVGDYPFTTVRPHLGMVKVDDSEVVIADIPGIITDAHLGVGLGHKFLKHIERCQILLHLIDVTHDDVVLAYSCIHNELELYNSDLVEKEEIVVLNKCDLLREAEILEKKNHLANYLNKEVLCLSINGDLQPILRLLSEKLKKSNSKEIDVYDPFKA.

The region spanning Met-1 to Leu-159 is the Obg domain. The 170-residue stretch at Ser-160 to Ser-329 folds into the OBG-type G domain. GTP-binding positions include Gly-166–Ser-173, Phe-191–Arg-195, Asp-212–Gly-215, Asn-279–Asp-282, and Asn-310–Asp-312. Mg(2+) contacts are provided by Ser-173 and Thr-193.

The protein belongs to the TRAFAC class OBG-HflX-like GTPase superfamily. OBG GTPase family. Monomer. Mg(2+) serves as cofactor.

The protein localises to the cytoplasm. An essential GTPase which binds GTP, GDP and possibly (p)ppGpp with moderate affinity, with high nucleotide exchange rates and a fairly low GTP hydrolysis rate. Plays a role in control of the cell cycle, stress response, ribosome biogenesis and in those bacteria that undergo differentiation, in morphogenesis control. The protein is GTPase Obg of Wolbachia pipientis wMel.